A 339-amino-acid polypeptide reads, in one-letter code: Longiborneol synthase CLM1 (339 aa).

Residues 1–17 (MLATPTLSNFDKPSLPS) show a composition bias toward polar residues. The tract at residues 1–21 (MLATPTLSNFDKPSLPSSEGG) is disordered. Mg(2+) is bound by residues aspartate 112, asparagine 241, serine 245, and glutamate 249. Positions 241 to 249 (NDVLSFYKE) match the NDXXSXXXE magnesium-binding motif motif.

This sequence belongs to the trichodiene synthase family. It depends on Mg(2+) as a cofactor. Mn(2+) is required as a cofactor.

The catalysed reaction is (2E,6E)-farnesyl diphosphate + H2O = (-)-longiborneol + diphosphate. It functions in the pathway mycotoxin biosynthesis. In terms of biological role, terpene cyclase involved in the biosynthesis of culmorin, a tricyclic sesquiterpene diol reported to have antifungal activity and some phytotoxicity to wheat coleoptile tissue, contributing to Fusarium head blight disease. The terpene cyclase CLM1 is responsible for the cyclization of farnesyl diphosphate into the intermediate longiborneol. Longiborneol is then hydroxylated in a regio- and endo-stereoselective manner at position C-11 by the cytochrome P450 monooxygenase CLM2 to produce culmorin. Additional non-specific oxygenases are also able to hydroxylate longiborneol at other sites than C-11 leading to 3-hydroxylongiborneol, 5-hydroxylongiborneol, 12-hydroxylongiborneol and 15-hydroxylongiborneol. Moreover, another oxygenase capable of installing a C-11 exo-hydroxy group in longiborneol can also yield 11-epi-acetylculmorin. The production of these longiborneol derivatives is dwarfed by the high abundance of culmorin, suggesting that CLM2 displays superior enzymatic activity to the unidentified, possibly promiscuous, additional oxygenases. This Gibberella zeae (strain ATCC MYA-4620 / CBS 123657 / FGSC 9075 / NRRL 31084 / PH-1) (Wheat head blight fungus) protein is Longiborneol synthase CLM1.